The sequence spans 666 residues: Vicilin-like antimicrobial peptides 2-1 (666 aa).

The N-terminal stretch at 1 to 27 (MAINTSNLCSLLFLLSLFLLSTTVSLA) is a signal peptide. Disordered stretches follow at residues 161–191 (QQKR…DPQQ) and 219–254 (QQRQ…PYYF). Cupin type-1 domains follow at residues 271–410 (SVLE…EKLR) and 455–625 (YNLF…KEVE). The segment at 629–655 (NSQDQSIFFPGPRQHQQQSPRSTKQQQ) is disordered. The segment covering 642-655 (QHQQQSPRSTKQQQ) has biased composition (low complexity).

The protein belongs to the 7S seed storage protein family.

Its subcellular location is the secreted. In terms of biological role, antimicrobial peptides 2b, 2c and 2d have antibacterial and antifungal activity against a range of species. The polypeptide is Vicilin-like antimicrobial peptides 2-1 (Macadamia integrifolia (Macadamia nut)).